The sequence spans 187 residues: NADH-dependent FMN reductase SfnF (187 aa).

The protein belongs to the SsuE family.

The catalysed reaction is FMNH2 + NAD(+) = FMN + NADH + 2 H(+). Its function is as follows. Involved in the dimethyl sulfide degradation pathway. Catalyzes the NADH-dependent reduction of FMN. This Pseudomonas fluorescens (strain Pf0-1) protein is NADH-dependent FMN reductase SfnF.